We begin with the raw amino-acid sequence, 836 residues long: uncharacterized protein (836 aa).

Disordered regions lie at residues 1-25, 692-718, and 789-836; these read MDST…NEEE, DSRS…NNQR, and ESSG…GYAS. Polar residues-rich tracts occupy residues 789–799 and 825–836; these read ESSGINVSNTR and IDSSSAQNGYAS.

It is found in the nucleus. This is an uncharacterized protein from Schizosaccharomyces pombe (strain 972 / ATCC 24843) (Fission yeast).